The chain runs to 102 residues: Large ribosomal subunit protein uL24 (102 aa).

It belongs to the universal ribosomal protein uL24 family. As to quaternary structure, part of the 50S ribosomal subunit.

In terms of biological role, one of two assembly initiator proteins, it binds directly to the 5'-end of the 23S rRNA, where it nucleates assembly of the 50S subunit. Its function is as follows. One of the proteins that surrounds the polypeptide exit tunnel on the outside of the subunit. This Rhizobium etli (strain CIAT 652) protein is Large ribosomal subunit protein uL24.